The following is a 29-amino-acid chain: MDILTLGWVSVLTLFTYSIAMVVWGRHGM.

Residues 3–23 traverse the membrane as a helical segment; the sequence is ILTLGWVSVLTLFTYSIAMVV.

The protein belongs to the PetN family. The 4 large subunits of the cytochrome b6-f complex are cytochrome b6, subunit IV (17 kDa polypeptide, PetD), cytochrome f and the Rieske protein, while the 4 small subunits are PetG, PetL, PetM and PetN. The complex functions as a dimer.

The protein resides in the cellular thylakoid membrane. Its function is as follows. Component of the cytochrome b6-f complex, which mediates electron transfer between photosystem II (PSII) and photosystem I (PSI), cyclic electron flow around PSI, and state transitions. This Acaryochloris marina (strain MBIC 11017) protein is Cytochrome b6-f complex subunit 8.